Reading from the N-terminus, the 295-residue chain is Mycothiol acetyltransferase (295 aa).

A 1D-myo-inositol 2-(L-cysteinylamino)-2-deoxy-alpha-D-glucopyranoside-binding site is contributed by Glu30. Residue 62–64 coordinates acetyl-CoA; the sequence is LVV. The 159-residue stretch at 137 to 295 folds into the N-acetyltransferase domain; that stretch reads VTVRAFRADS…DDDTHVQYRR (159 aa). Glu165, Lys209, and Glu227 together coordinate 1D-myo-inositol 2-(L-cysteinylamino)-2-deoxy-alpha-D-glucopyranoside. Acetyl-CoA is bound by residues 231-233 and 238-244; these read VGI and QGRGLGK. Tyr265 contributes to the 1D-myo-inositol 2-(L-cysteinylamino)-2-deoxy-alpha-D-glucopyranoside binding site.

This sequence belongs to the acetyltransferase family. MshD subfamily. Monomer.

The enzyme catalyses 1D-myo-inositol 2-(L-cysteinylamino)-2-deoxy-alpha-D-glucopyranoside + acetyl-CoA = mycothiol + CoA + H(+). Functionally, catalyzes the transfer of acetyl from acetyl-CoA to desacetylmycothiol (Cys-GlcN-Ins) to form mycothiol. This Nocardioides sp. (strain ATCC BAA-499 / JS614) protein is Mycothiol acetyltransferase.